We begin with the raw amino-acid sequence, 123 residues long: MAATAEVIPAGEVIACHTVEDWNNKLKAAKESNKLIVIDFTAVWCPPCRFIAPIFVELAKKHLDVVFFKVDVDELATVAQEFDVQAMPTFVYMKGEEKLDKVVGAAKEEIEAKLLKHSQVAAA.

Ala2 is subject to N-acetylalanine. In terms of domain architecture, Thioredoxin spans 2 to 119 (AATAEVIPAG…IEAKLLKHSQ (118 aa)). An intrachain disulfide couples Cys45 to Cys48.

The protein belongs to the thioredoxin family. Plant H-type subfamily.

The protein resides in the cytoplasm. Participates in various redox reactions through the reversible oxidation of the active center dithiol to a disulfide. The H form is known to activate a number of cytosolic enzymes. This Brassica napus (Rape) protein is Thioredoxin H-type 1 (THL-1).